A 276-amino-acid polypeptide reads, in one-letter code: S-adenosylmethionine-dependent nucleotide dehydratase (276 aa).

The region spanning 6-216 (TSVRKFRSAN…RRRHEDIGCI (211 aa)) is the Radical SAM core domain. [4Fe-4S] cluster-binding residues include Cys-22, Cys-26, and Cys-29.

It belongs to the radical SAM superfamily. Viperin family. [4Fe-4S] cluster serves as cofactor.

The enzyme catalyses CTP + AH2 + S-adenosyl-L-methionine = 3'-deoxy-3',4'-didehydro-CTP + 5'-deoxyadenosine + L-methionine + A + H2O + H(+). Its function is as follows. Expression of pVip50 in E.coli (strain MG1655) confers resistance to phage P1; has no effect against T7. Catalyzes the conversion of cytosine triphosphate (CTP) to 3'-deoxy-3',4'-didehydro-CTP (ddhCTP), probably via a SAM-dependent radical mechanism. The modified nucleotide represses transcription from T7 RNA polymerase-directed genes (possibly by acting as chain terminators), strongly suggesting these nucleotides block viral polymerase transcription. How this protein allows bacteria to resist viruses that do not encode their own RNA polymerase (such as lambda, P1) is unknown. This chain is S-adenosylmethionine-dependent nucleotide dehydratase, found in Thermoplasmatales archaeon (strain ISO4-H5).